The following is a 79-amino-acid chain: Cyclin-dependent kinases regulatory subunit 2 (79 aa).

Lys4 carries the N6-acetyllysine modification.

This sequence belongs to the CKS family. Forms a homohexamer that can probably bind six kinase subunits.

Its function is as follows. Binds to the catalytic subunit of the cyclin dependent kinases and is essential for their biological function. The protein is Cyclin-dependent kinases regulatory subunit 2 (Cks2) of Mus musculus (Mouse).